Consider the following 245-residue polypeptide: MKALIGIGLCAALLGGCAALPGRDGPRECSQQLGQEQELQMNMVRDMIREGRLHAALANLESMPPGLLDVREERALILRRIGDPRARAEYQALLETCKAPEAHHGLGLLALRNGDSARAVLELREAARLRPTESRFRNDLGVALLKRGDRVGARFEFITALELQQGGKLPATNLLGLLYLQGDREDAQRLIERLQLDARDIRAAEARARSWGAVPTPGAAPASDDPLAELPAEANMHTAMANEAP.

An N-terminal signal peptide occupies residues 1-16 (MKALIGIGLCAALLGG). The N-palmitoyl cysteine moiety is linked to residue Cys17. A lipid anchor (S-diacylglycerol cysteine) is attached at Cys17. TPR repeat units follow at residues 100–133 (PEAH…RPTE), 135–167 (RFRN…QQGG), and 169–200 (LPAT…DARD). The disordered stretch occupies residues 210-245 (SWGAVPTPGAAPASDDPLAELPAEANMHTAMANEAP).

The protein resides in the cell membrane. The sequence is that of TPR repeat-containing protein PA4299 from Pseudomonas aeruginosa (strain ATCC 15692 / DSM 22644 / CIP 104116 / JCM 14847 / LMG 12228 / 1C / PRS 101 / PAO1).